The sequence spans 291 residues: Ribonuclease Z (291 aa).

Zn(2+)-binding residues include histidine 61, histidine 63, aspartate 65, histidine 66, histidine 133, aspartate 201, and histidine 257. Aspartate 65 serves as the catalytic Proton acceptor.

It belongs to the RNase Z family. In terms of assembly, homodimer. Requires Zn(2+) as cofactor.

It catalyses the reaction Endonucleolytic cleavage of RNA, removing extra 3' nucleotides from tRNA precursor, generating 3' termini of tRNAs. A 3'-hydroxy group is left at the tRNA terminus and a 5'-phosphoryl group is left at the trailer molecule.. Its function is as follows. Zinc phosphodiesterase, which displays some tRNA 3'-processing endonuclease activity. Probably involved in tRNA maturation, by removing a 3'-trailer from precursor tRNA. This is Ribonuclease Z from Saccharolobus solfataricus (strain ATCC 35092 / DSM 1617 / JCM 11322 / P2) (Sulfolobus solfataricus).